Consider the following 194-residue polypeptide: Putative manganese efflux pump MntP (194 aa).

The next 6 membrane-spanning stretches (helical) occupy residues 3-23 (PITTLLIGIAMSTDAFAAAIG), 37-57 (LYVAVIFGVIETATPIAGWLL), 65-85 (IATFDHWIAFGLLGGLGIHMI), 112-132 (LAATALATSIDAAAIGISMAF), 137-157 (IGIVAAVIGLCTFTMVIFGVM), and 170-190 (AEIVGGIILIIVGSTILYEHL).

It belongs to the MntP (TC 9.B.29) family.

Its subcellular location is the cell inner membrane. Probably functions as a manganese efflux pump. This Xylella fastidiosa (strain M23) protein is Putative manganese efflux pump MntP.